The chain runs to 249 residues: ATP synthase subunit a, chloroplastic (249 aa).

The next 5 membrane-spanning stretches (helical) occupy residues 40–60 (QVLI…VLVV), 97–117 (VPFI…GALL), 136–156 (INTT…AGLS), 201–221 (LVVV…VMFL), and 222–242 (GLFT…AYIG).

It belongs to the ATPase A chain family. F-type ATPases have 2 components, CF(1) - the catalytic core - and CF(0) - the membrane proton channel. CF(1) has five subunits: alpha(3), beta(3), gamma(1), delta(1), epsilon(1). CF(0) has four main subunits: a, b, b' and c.

Its subcellular location is the plastid. The protein localises to the chloroplast thylakoid membrane. Key component of the proton channel; it plays a direct role in the translocation of protons across the membrane. This is ATP synthase subunit a, chloroplastic from Aethionema grandiflorum (Persian stone-cress).